We begin with the raw amino-acid sequence, 186 residues long: UPF0398 protein LBUL_0921 (186 aa).

This sequence belongs to the UPF0398 family.

This Lactobacillus delbrueckii subsp. bulgaricus (strain ATCC BAA-365 / Lb-18) protein is UPF0398 protein LBUL_0921.